Reading from the N-terminus, the 227-residue chain is NADH-quinone oxidoreductase subunit C (227 aa).

Belongs to the complex I 30 kDa subunit family. As to quaternary structure, NDH-1 is composed of 14 different subunits. Subunits NuoB, C, D, E, F, and G constitute the peripheral sector of the complex.

The protein localises to the cell inner membrane. The enzyme catalyses a quinone + NADH + 5 H(+)(in) = a quinol + NAD(+) + 4 H(+)(out). Its function is as follows. NDH-1 shuttles electrons from NADH, via FMN and iron-sulfur (Fe-S) centers, to quinones in the respiratory chain. The immediate electron acceptor for the enzyme in this species is believed to be ubiquinone. Couples the redox reaction to proton translocation (for every two electrons transferred, four hydrogen ions are translocated across the cytoplasmic membrane), and thus conserves the redox energy in a proton gradient. This Legionella pneumophila (strain Paris) protein is NADH-quinone oxidoreductase subunit C.